We begin with the raw amino-acid sequence, 138 residues long: Putative pre-16S rRNA nuclease (138 aa).

The protein belongs to the YqgF nuclease family.

It is found in the cytoplasm. Its function is as follows. Could be a nuclease involved in processing of the 5'-end of pre-16S rRNA. The polypeptide is Putative pre-16S rRNA nuclease (Klebsiella pneumoniae subsp. pneumoniae (strain ATCC 700721 / MGH 78578)).